The primary structure comprises 257 residues: Gamma-secretase subunit APH-1B (257 aa).

Transmembrane regions (helical) follow at residues 5–25, 32–52, 71–91, 115–135, 158–178, 186–206, and 213–233; these read VFFGCAFIAFGPALALYVFTI, IIFLIAGAFFWLVSLLISSLV, LLIFGAFVSVYIQEMFRFAYY, LLAYVSGLGFGIMSGVFSFVN, YSAFMTLVIILLHVFWGIVFF, WGILLIVLLTHLLVSAQTFIS, and LASAFIILVLMGTWAFLAAGG.

It belongs to the APH-1 family. As to quaternary structure, probable component of the gamma-secretase complex, a complex composed of a presenilin homodimer (PSEN1 or PSEN2), nicastrin (NCSTN), APH1 (APH1A or APH1B) and PEN2. Such minimal complex is sufficient for secretase activity, although other components may exist. Interacts with PSEN1 and PSEN2. As to expression, weakly or not expressed in leukocytes, lung, placenta, small intestine, liver, kidney, spleen thymus, colon, skeletal muscle, heart and brain.

It is found in the membrane. Functionally, probable subunit of the gamma-secretase complex, an endoprotease complex that catalyzes the intramembrane cleavage of integral proteins such as Notch receptors and APP (amyloid-beta precursor protein). It probably represents a stabilizing cofactor for the presenilin homodimer that promotes the formation of a stable complex. Probably present in a minority of gamma-secretase complexes compared to APH1A. The protein is Gamma-secretase subunit APH-1B (APH1B) of Homo sapiens (Human).